Consider the following 360-residue polypeptide: WAT1-related protein At3g28070 (360 aa).

10 helical membrane passes run A15 to F35, I45 to F65, I84 to Y104, T108 to F128, S140 to Y160, W190 to L210, V224 to E244, P248 to V268, L286 to F306, and L311 to W331. The region spanning G30–I158 is the EamA domain.

Belongs to the drug/metabolite transporter (DMT) superfamily. Plant drug/metabolite exporter (P-DME) (TC 2.A.7.4) family.

It localises to the membrane. This chain is WAT1-related protein At3g28070, found in Arabidopsis thaliana (Mouse-ear cress).